The sequence spans 150 residues: Large ribosomal subunit protein uL13 (150 aa).

The protein belongs to the universal ribosomal protein uL13 family. In terms of assembly, part of the 50S ribosomal subunit.

This protein is one of the early assembly proteins of the 50S ribosomal subunit, although it is not seen to bind rRNA by itself. It is important during the early stages of 50S assembly. The polypeptide is Large ribosomal subunit protein uL13 (Chlorobaculum parvum (strain DSM 263 / NCIMB 8327) (Chlorobium vibrioforme subsp. thiosulfatophilum)).